The following is a 93-amino-acid chain: U12-lycotoxin-Ls1e (93 aa).

The first 18 residues, 1–18 (MKFAVILLFTLVVLAVAS), serve as a signal peptide directing secretion. Positions 19-38 (ESVEEDTREIDVEEFQEQQR) are excised as a propeptide.

Belongs to the neurotoxin 31 family. Contains 5 disulfide bonds. As to expression, expressed by the venom gland.

The protein resides in the secreted. The polypeptide is U12-lycotoxin-Ls1e (Lycosa singoriensis (Wolf spider)).